Reading from the N-terminus, the 363-residue chain is F-box protein At3g44326 (363 aa).

Residues 1–23 are disordered; the sequence is MLSSSSSSTVEQPSRGGSPGINA. The F-box domain occupies 27–66; sequence DVLRSNILTRLDGSSLAALSCTCSNLNSFCSDESLWRQQC.

This is F-box protein At3g44326 from Arabidopsis thaliana (Mouse-ear cress).